A 227-amino-acid chain; its full sequence is Threonine--tRNA ligase (227 aa).

The segment at 1-120 (DIELKLSTRP…LIEHYEGAFP (120 aa)) is catalytic.

It belongs to the class-II aminoacyl-tRNA synthetase family. As to quaternary structure, homodimer.

The protein resides in the cytoplasm. The catalysed reaction is tRNA(Thr) + L-threonine + ATP = L-threonyl-tRNA(Thr) + AMP + diphosphate + H(+). Its function is as follows. Catalyzes the attachment of threonine to tRNA(Thr) in a two-step reaction: L-threonine is first activated by ATP to form Thr-AMP and then transferred to the acceptor end of tRNA(Thr). Also edits incorrectly charged L-seryl-tRNA(Thr). In Pseudomonas syringae pv. syringae, this protein is Threonine--tRNA ligase.